Here is a 200-residue protein sequence, read N- to C-terminus: uncharacterized protein (200 aa).

The helical transmembrane segment at 104–124 threads the bilayer; that stretch reads SNLLICFLFLCGLYHISVFTG.

It is found in the membrane. This is an uncharacterized protein from Escherichia coli (strain K12).